The primary structure comprises 159 residues: Ribosomal RNA large subunit methyltransferase H (159 aa).

Residues Leu76, Gly108, and 127 to 132 contribute to the S-adenosyl-L-methionine site; that span reads LSKMTY.

The protein belongs to the RNA methyltransferase RlmH family. In terms of assembly, homodimer.

The protein resides in the cytoplasm. The catalysed reaction is pseudouridine(1915) in 23S rRNA + S-adenosyl-L-methionine = N(3)-methylpseudouridine(1915) in 23S rRNA + S-adenosyl-L-homocysteine + H(+). Its function is as follows. Specifically methylates the pseudouridine at position 1915 (m3Psi1915) in 23S rRNA. The chain is Ribosomal RNA large subunit methyltransferase H from Ruminiclostridium cellulolyticum (strain ATCC 35319 / DSM 5812 / JCM 6584 / H10) (Clostridium cellulolyticum).